The chain runs to 640 residues: MPIITLPDGSQRTFDHPVSVAEVAQSIGAGLAKATVAGKVDGKLVDACDLIDHDATLQIITPKDEEGVEIIRHSCAHLVGHAVKQLYPTAKMVIGPVIDEGFYYDIAYERPFTPEDVAAIEQRMRELIDRDYDVVKKMTPREQVIEVFKSRGEDYKLRLIDDMPDEKAMGLYYHEEYVDMCRGPHVPNTRFLKAFKLTKLSGAYWRGDAKNEQLQRVYGTAWADKKQLAAYIQRIEEAEKRDHRKLGKRLDLFHTQEEAPGMVFWHPNGWTVYQVLEQYMRAVQRENGYLEIKTPQVVDRVLWEKSGHWANYAENMFTTESESRDYAIKPMNCPCHVQVYNQGLKSYRELPLRLAEFGACHRNEPSGALHGIMRVRGFTQDDAHIFCTEEQMQAESAAFIKLTRQVYADFGFQDIQLKLSTRPERRVGSGELWDRAEEALAAALESAGLPYELQPGEGAFYGPKIEFSLKDCLGRVWQCGTLQLDFNLPVRLGAEYVSENNERQHPVMLHRAILGSFERFIGILIEHYEGAFPAWLAPTQAVIMNITDKQGEFALEVERTLNQGGFRAKCDLRNEKIGFKIREHTLLKVPYLLVIGDREVETHSVAVRTREGVDLGTMPVEQFREMLAQAVARRGRQELE.

The 61-residue stretch at Met-1 to Thr-61 folds into the TGS domain. The catalytic stretch occupies residues Asp-242–Pro-533. Zn(2+)-binding residues include Cys-333, His-384, and His-510.

It belongs to the class-II aminoacyl-tRNA synthetase family. As to quaternary structure, homodimer. Requires Zn(2+) as cofactor.

The protein resides in the cytoplasm. It carries out the reaction tRNA(Thr) + L-threonine + ATP = L-threonyl-tRNA(Thr) + AMP + diphosphate + H(+). Its function is as follows. Catalyzes the attachment of threonine to tRNA(Thr) in a two-step reaction: L-threonine is first activated by ATP to form Thr-AMP and then transferred to the acceptor end of tRNA(Thr). Also edits incorrectly charged L-seryl-tRNA(Thr). The protein is Threonine--tRNA ligase of Azotobacter vinelandii (strain DJ / ATCC BAA-1303).